The primary structure comprises 148 residues: Lysozyme-like protein 6 (148 aa).

A signal peptide spans 1–19; sequence MTSPLLISLASCLVAVNQA. Residues 20 to 148 form the C-type lysozyme domain; the sequence is SLIGRCDLAK…SYWMTGCHLA (129 aa). 4 disulfide bridges follow: cysteine 25/cysteine 145, cysteine 49/cysteine 133, cysteine 83/cysteine 98, and cysteine 94/cysteine 112. Active-site residues include glutamate 54 and aspartate 71.

This sequence belongs to the glycosyl hydrolase 22 family. As to quaternary structure, monomer.

The protein resides in the secreted. The protein localises to the cell surface. It is found in the cell projection. It localises to the cilium. Its subcellular location is the flagellum. It catalyses the reaction Hydrolysis of (1-&gt;4)-beta-linkages between N-acetylmuramic acid and N-acetyl-D-glucosamine residues in a peptidoglycan and between N-acetyl-D-glucosamine residues in chitodextrins.. May be involved sperm-egg plasma membrane adhesion and fusion during fertilization. Exhibits bacteriolytic activity in vitro against Micrococcus luteus and Staphylococcus aureus. Shows weak bacteriolytic activity against Gram-positive bacteria at physiological pH. Bacteriolytic activity is pH-dependent, with a maximum at around pH 5.6. The sequence is that of Lysozyme-like protein 6 (LYZL6) from Bos taurus (Bovine).